The sequence spans 503 residues: ATP synthase subunit alpha (503 aa).

170–177 (GDRKTGKT) contacts ATP.

The protein belongs to the ATPase alpha/beta chains family. In terms of assembly, F-type ATPases have 2 components, CF(1) - the catalytic core - and CF(0) - the membrane proton channel. CF(1) has five subunits: alpha(3), beta(3), gamma(1), delta(1), epsilon(1). CF(0) has four main subunits: a(1), b(1), b'(1) and c(9-12).

The protein localises to the cellular thylakoid membrane. The enzyme catalyses ATP + H2O + 4 H(+)(in) = ADP + phosphate + 5 H(+)(out). Produces ATP from ADP in the presence of a proton gradient across the membrane. The alpha chain is a regulatory subunit. The sequence is that of ATP synthase subunit alpha from Synechocystis sp. (strain ATCC 27184 / PCC 6803 / Kazusa).